A 349-amino-acid polypeptide reads, in one-letter code: Replication-associated protein (349 aa).

The CRESS-DNA virus Rep endonuclease domain maps to 9–117; that stretch reads QIAAKNYFLT…DGDTIEWGEF (109 aa). The short motif at 16 to 19 is the RCR-1 element; the sequence is FLTY. Glutamate 50, histidine 58, and histidine 60 together coordinate a divalent metal cation. The RCR-2 motif lies at 58–60; that stretch reads HLH. The active-site For DNA cleavage activity is tyrosine 104. The RCR-3 signature appears at 104-107; it reads YVDK. Aspartate 108 contacts a divalent metal cation. Residues 144–154 form a binding to RBR1 region; the sequence is KEEALQIIKEK. The oligomerization stretch occupies residues 157 to 177; the sequence is KDFLFCYHNLVSNLDRIFTPA. 223 to 230 contributes to the ATP binding site; it reads GESRTGKT.

Belongs to the geminiviridae Rep protein family. In terms of assembly, homooligomer. Interacts with the replication enhancer protein (REn). Interacts with host retinoblastoma-related protein 1 (RBR1), and may thereby induce the transcription of host replicative enzymes even if the cell is not dividing anymore. Interacts with host PCNA. Interacts with host SCE1 protein. Requires Mg(2+) as cofactor. The cofactor is Mn(2+).

It localises to the host nucleus. Functionally, essential for the replication of viral ssDNA. The closed circular ssDNA genome is first converted to a superhelical dsDNA. Rep binds a specific region at the genome origin of replication. It introduces an endonucleolytic nick within the conserved sequence 5'-TAATATTAC-3' in the intergenic region of the genome present in all geminiviruses, thereby initiating the rolling circle replication (RCR). Following cleavage, binds covalently to the 5'-phosphate of DNA as a tyrosyl ester. The cleavage gives rise to a free 3'-OH that serves as a primer for the cellular DNA polymerase. The polymerase synthesizes the (+) strand DNA by rolling circle mechanism. After one round of replication, a Rep-catalyzed nucleotidyl transfer reaction releases a circular single-stranded virus genome, thereby terminating the replication. Displays origin-specific DNA cleavage, nucleotidyl transferase, ATPase and helicase activities. The chain is Replication-associated protein from Solanum lycopersicum (Tomato).